Here is a 149-residue protein sequence, read N- to C-terminus: Alpha-crystallin A chain (149 aa).

Residues 41 to 149 (LFRTVLESGI…DTSYSERPIP (109 aa)) form the sHSP domain. Residues His-89, Glu-91, and His-96 each contribute to the Zn(2+) site.

Belongs to the small heat shock protein (HSP20) family. Heteropolymer composed of three CRYAA and one CRYAB subunits. Inter-subunit bridging via zinc ions enhances stability, which is crucial as there is no protein turn over in the lens. Zinc coordination is achieved at least by His-89, Glu-91 and His-96. His-83 and Glu-85 come from the same molecule within the oligomer, while His-90 residue is provided by another molecule. Can also form homodimers and homotetramers (dimers of dimers) which serve as the building blocks of homooligomers.

It is found in the cytoplasm. It localises to the nucleus. Functionally, contributes to the transparency and refractive index of the lens. May act as a chaperone, preventing aggregation of various proteins under a wide range of stress conditions. In Trachemys scripta elegans (Red-eared slider turtle), this protein is Alpha-crystallin A chain (CRYAA).